Here is a 336-residue protein sequence, read N- to C-terminus: Ribosomal RNA large subunit methyltransferase F (336 aa).

Basic residues predominate over residues 212-231 (HHLERSRGKPTGKGVRRVRS). The interval 212–234 (HHLERSRGKPTGKGVRRVRSGRM) is disordered.

This sequence belongs to the methyltransferase superfamily. METTL16/RlmF family.

The protein localises to the cytoplasm. It carries out the reaction adenosine(1618) in 23S rRNA + S-adenosyl-L-methionine = N(6)-methyladenosine(1618) in 23S rRNA + S-adenosyl-L-homocysteine + H(+). Specifically methylates the adenine in position 1618 of 23S rRNA. The sequence is that of Ribosomal RNA large subunit methyltransferase F from Methylobacillus flagellatus (strain ATCC 51484 / DSM 6875 / VKM B-1610 / KT).